Here is a 718-residue protein sequence, read N- to C-terminus: Protein Hook homolog 3 (718 aa).

An N-acetylmethionine modification is found at methionine 1. The interval 1–164 is sufficient for interaction with microtubules; it reads MFNVESVERV…QELMSKESPV (164 aa). The residue at position 6 (serine 6) is a Phosphoserine. The 117-residue stretch at 10–126 folds into the Calponin-homology (CH) domain; that stretch reads VELCESLLTW…RMLQLILGCA (117 aa). 2 coiled-coil regions span residues 168–433 and 462–663; these read HDAY…VQAQ and EIRE…MEEK. Serine 238 is subject to Phosphoserine. A sufficient for interaction with IIGP1 region spans residues 450 to 671; the sequence is SSDSLAAEIV…EKYIVSAWYN (222 aa). Residues 553–718 are required for association with Golgi; it reads EKLHEANNEL…PGHVQPATAR (166 aa). The segment at 682–718 is disordered; the sequence is EDRLASTGSGQSFLARQRQATSTRRSYPGHVQPATAR. Polar residues predominate over residues 687-706; the sequence is STGSGQSFLARQRQATSTRR. A phosphoserine mark is found at serine 693 and serine 707.

The protein belongs to the hook family. As to quaternary structure, self-associates. Component of the FTS/Hook/FHIP complex (FHF complex), composed of AKTIP/FTS, FHIP1B, and one or more members of the Hook family of proteins HOOK1, HOOK2, and HOOK3. May interact directly with AKTIP/FTS, HOOK1 and HOOK2. Associates with several subunits of the homotypic vesicular sorting complex (the HOPS complex) including VPS16 and VPS41; these interactions may be indirect. Interacts with IIGP1. Interacts with MSR1, and this association is stimulated by ligand binding to MSR1. Interacts with microtubules. Part of a tripartite complex with dynein and dynactin, acts an adapter linking the dynein motor complex and dynactin. Interacts with dynein intermediate chain and dynactin (DCTN1). Interacts with CCDC181. Interacts with LRGUK. (Microbial infection) Interacts with Salmonella typhimurium spiC. As to expression, expressed in brain, cerebellum, heart, intestine, kidney, liver, lung, skeletal muscle, spleen and stomach (at protein level).

It localises to the cytoplasm. Its subcellular location is the cytoskeleton. It is found in the golgi apparatus. In terms of biological role, acts as an adapter protein linking the dynein motor complex to various cargos and converts dynein from a non-processive to a highly processive motor in the presence of dynactin. Facilitates the interaction between dynein and dynactin and activates dynein processivity (the ability to move along a microtubule for a long distance without falling off the track). Predominantly recruits 2 dyneins, which increases both the force and speed of the microtubule motor. Component of the FTS/Hook/FHIP complex (FHF complex). The FHF complex may function to promote vesicle trafficking and/or fusion via the homotypic vesicular protein sorting complex (the HOPS complex). May regulate clearance of endocytosed receptors such as MSR1. Participates in defining the architecture and localization of the Golgi complex. FHF complex promotes the distribution of AP-4 complex to the perinuclear area of the cell. (Microbial infection) Serves as a target for the spiC protein from Salmonella typhimurium, which inactivates it, leading to a strong alteration in cellular trafficking. This chain is Protein Hook homolog 3 (Hook3), found in Mus musculus (Mouse).